A 293-amino-acid chain; its full sequence is Probable E3 ubiquitin-protein ligase RNF144A-B (293 aa).

Residues 16 to 237 form a TRIAD supradomain region; the sequence is PLLSCKLCLG…YDKGPCRNKL (222 aa). Residues Cys20, Cys23, Cys43, Cys46, Cys111, Cys116, Cys135, Cys138, Cys143, Cys146, His151, Cys156, Cys186, and Cys189 each contribute to the Zn(2+) site. The segment at 20–70 adopts an RING-type 1 zinc-finger fold; sequence CKLCLGEFPLEQMTTISQCQCIFCSLCLKQYVELLIKEGLETAISCPDSAC. An IBR-type zinc finger spans residues 91–156; the sequence is QHYKRLQFER…RADCHTGQAC (66 aa). Residues 186–215 form an RING-type 2; atypical zinc finger; the sequence is CPKCKVYIERDEGCAQMMCKNCKHAFCWYC. Residue Cys199 is part of the active site. 6 residues coordinate Zn(2+): Cys204, Cys207, Cys212, Cys215, His227, and Cys233. Residues 251 to 271 form a helical membrane-spanning segment; it reads VVGIFAGFGLLLLVASPFLLL.

The protein belongs to the RBR family. RNF144 subfamily.

The protein localises to the membrane. The enzyme catalyses [E2 ubiquitin-conjugating enzyme]-S-ubiquitinyl-L-cysteine + [acceptor protein]-L-lysine = [E2 ubiquitin-conjugating enzyme]-L-cysteine + [acceptor protein]-N(6)-ubiquitinyl-L-lysine.. The protein operates within protein modification; protein ubiquitination. In terms of biological role, E3 ubiquitin-protein ligase which accepts ubiquitin from E2 ubiquitin-conjugating enzymes ube2l3 and ube2l6 in the form of a thioester and then directly transfers the ubiquitin to targeted substrates. In Danio rerio (Zebrafish), this protein is Probable E3 ubiquitin-protein ligase RNF144A-B (rnf144ab).